We begin with the raw amino-acid sequence, 338 residues long: Ketol-acid reductoisomerase (NADP(+)) (338 aa).

The 181-residue stretch at 1-181 folds into the KARI N-terminal Rossmann domain; sequence MNVYYDRDCD…GGGRTGIIET (181 aa). Residues 24-27, arginine 47, serine 50, serine 52, and 82-85 contribute to the NADP(+) site; these read YGSQ and DEFQ. The active site involves histidine 107. Glycine 133 is an NADP(+) binding site. The region spanning 182–327 is the KARI C-terminal knotted domain; that stretch reads TFKDETETDL…GNLRAMMPWI (146 aa). Mg(2+) is bound by residues aspartate 190, glutamate 194, glutamate 226, and glutamate 230. Serine 251 is a binding site for substrate.

Belongs to the ketol-acid reductoisomerase family. Mg(2+) serves as cofactor.

It catalyses the reaction (2R)-2,3-dihydroxy-3-methylbutanoate + NADP(+) = (2S)-2-acetolactate + NADPH + H(+). It carries out the reaction (2R,3R)-2,3-dihydroxy-3-methylpentanoate + NADP(+) = (S)-2-ethyl-2-hydroxy-3-oxobutanoate + NADPH + H(+). It functions in the pathway amino-acid biosynthesis; L-isoleucine biosynthesis; L-isoleucine from 2-oxobutanoate: step 2/4. It participates in amino-acid biosynthesis; L-valine biosynthesis; L-valine from pyruvate: step 2/4. Its function is as follows. Involved in the biosynthesis of branched-chain amino acids (BCAA). Catalyzes an alkyl-migration followed by a ketol-acid reduction of (S)-2-acetolactate (S2AL) to yield (R)-2,3-dihydroxy-isovalerate. In the isomerase reaction, S2AL is rearranged via a Mg-dependent methyl migration to produce 3-hydroxy-3-methyl-2-ketobutyrate (HMKB). In the reductase reaction, this 2-ketoacid undergoes a metal-dependent reduction by NADPH to yield (R)-2,3-dihydroxy-isovalerate. The protein is Ketol-acid reductoisomerase (NADP(+)) of Trichlorobacter lovleyi (strain ATCC BAA-1151 / DSM 17278 / SZ) (Geobacter lovleyi).